Here is a 371-residue protein sequence, read N- to C-terminus: Carbamoyl phosphate synthase small chain (371 aa).

The segment at 1 to 186 (MDYYNNDTPG…IHQGKTGDVV (186 aa)) is CPSase. L-glutamine-binding residues include Ser-52, Gly-233, and Gly-235. Residues 185-371 (VVVVVDCGIK…KFKKMVVGDA (187 aa)) form the Glutamine amidotransferase type-1 domain. The active-site Nucleophile is Cys-261. Positions 262, 265, 303, 305, and 306 each coordinate L-glutamine. Active-site residues include His-346 and Glu-348.

The protein belongs to the CarA family. In terms of assembly, composed of two chains; the small (or glutamine) chain promotes the hydrolysis of glutamine to ammonia, which is used by the large (or ammonia) chain to synthesize carbamoyl phosphate. Tetramer of heterodimers (alpha,beta)4.

It carries out the reaction hydrogencarbonate + L-glutamine + 2 ATP + H2O = carbamoyl phosphate + L-glutamate + 2 ADP + phosphate + 2 H(+). It catalyses the reaction L-glutamine + H2O = L-glutamate + NH4(+). The protein operates within amino-acid biosynthesis; L-arginine biosynthesis; carbamoyl phosphate from bicarbonate: step 1/1. Its pathway is pyrimidine metabolism; UMP biosynthesis via de novo pathway; (S)-dihydroorotate from bicarbonate: step 1/3. Small subunit of the glutamine-dependent carbamoyl phosphate synthetase (CPSase). CPSase catalyzes the formation of carbamoyl phosphate from the ammonia moiety of glutamine, carbonate, and phosphate donated by ATP, constituting the first step of 2 biosynthetic pathways, one leading to arginine and/or urea and the other to pyrimidine nucleotides. The small subunit (glutamine amidotransferase) binds and cleaves glutamine to supply the large subunit with the substrate ammonia. In Sulfolobus acidocaldarius (strain ATCC 33909 / DSM 639 / JCM 8929 / NBRC 15157 / NCIMB 11770), this protein is Carbamoyl phosphate synthase small chain.